We begin with the raw amino-acid sequence, 137 residues long: UPF0148 protein MJ0890 (137 aa).

Belongs to the UPF0148 family.

The sequence is that of UPF0148 protein MJ0890 from Methanocaldococcus jannaschii (strain ATCC 43067 / DSM 2661 / JAL-1 / JCM 10045 / NBRC 100440) (Methanococcus jannaschii).